A 496-amino-acid polypeptide reads, in one-letter code: Zinc finger protein PLAGL2 (496 aa).

6 C2H2-type zinc fingers span residues 68-92 (YSCP…MATH), 98-120 (HQCM…LQTH), 127-149 (LHCS…LAMH), 156-178 (LSCK…LKAH), 191-213 (HPCD…LVVH), and 219-242 (FLCQ…KKSH).

The protein belongs to the krueppel C2H2-type zinc-finger protein family.

It is found in the nucleus. Functionally, shows weak transcriptional activatory activity. The protein is Zinc finger protein PLAGL2 (PLAGL2) of Homo sapiens (Human).